A 270-amino-acid chain; its full sequence is Probable ribosome biogenesis GTPase A (270 aa).

Residues 20 to 174 form the CP-type G domain; sequence HDQLKKLSSQ…LSDTPGVFLK (155 aa). Residues 126 to 131 and glycine 170 contribute to the GTP site; that span reads NVGKSS.

The protein belongs to the TRAFAC class YlqF/YawG GTPase family. MTG1 subfamily.

The protein resides in the cytoplasm. Functionally, required for a late step of 50S ribosomal subunit assembly. Has GTPase activity. Binds to the 23S rRNA. This chain is Probable ribosome biogenesis GTPase A (rbgA), found in Mycoplasma genitalium (strain ATCC 33530 / DSM 19775 / NCTC 10195 / G37) (Mycoplasmoides genitalium).